A 135-amino-acid chain; its full sequence is Lactoylglutathione lyase (135 aa).

One can recognise a VOC domain in the interval 2-126; that stretch reads QILHTMLRVG…DGYKIEFIEN (125 aa). Histidine 5 contacts Ni(2+). Arginine 9 contacts substrate. Glutamate 56 lines the Ni(2+) pocket. Substrate contacts are provided by asparagine 60 and histidine 74. Residues histidine 74 and glutamate 122 each coordinate Ni(2+). Residue glutamate 122 is the Proton donor/acceptor of the active site.

The protein belongs to the glyoxalase I family. Homodimer. Ni(2+) is required as a cofactor.

It carries out the reaction (R)-S-lactoylglutathione = methylglyoxal + glutathione. The protein operates within secondary metabolite metabolism; methylglyoxal degradation; (R)-lactate from methylglyoxal: step 1/2. Its function is as follows. Catalyzes the conversion of hemimercaptal, formed from methylglyoxal and glutathione, to S-lactoylglutathione. This chain is Lactoylglutathione lyase (gloA), found in Haemophilus influenzae (strain ATCC 51907 / DSM 11121 / KW20 / Rd).